The primary structure comprises 470 residues: Uronate isomerase (470 aa).

This sequence belongs to the metallo-dependent hydrolases superfamily. Uronate isomerase family.

The enzyme catalyses D-glucuronate = D-fructuronate. The catalysed reaction is aldehydo-D-galacturonate = keto-D-tagaturonate. The protein operates within carbohydrate metabolism; pentose and glucuronate interconversion. The polypeptide is Uronate isomerase (Escherichia coli O8 (strain IAI1)).